Here is a 778-residue protein sequence, read N- to C-terminus: Probable cation-transporting ATPase exp7 (778 aa).

At 1-37 (MDKNKIMGLTQREVKERQAEGLVNDFTASASTSTWQI) the chain is on the cytoplasmic side. The chain crosses the membrane as a helical span at residues 38–57 (VKRNVFTLFNALNFAIALAL). Over 58-64 (AFVQAWS) the chain is Extracellular. Residues 65-84 (NLVFFAVICFNAFSGIVTEL) form a helical membrane-spanning segment. Topologically, residues 85–209 (RAKHMVDKLN…PINSRIMKSL (125 aa)) are cytoplasmic. Residues 210–229 (DKLAGFTGKIIIPFGLALLL) form a helical membrane-spanning segment. Residues 230 to 242 (EALLLKGLPLKSS) are Extracellular-facing. Residues 243–260 (VVNSSTALLGMLPKGIAL) traverse the membrane as a helical segment. Residues 261-586 (LTITSLLTAV…FEGRRVVNNI (326 aa)) are Cytoplasmic-facing. Residue Asp298 is the 4-aspartylphosphate intermediate of the active site. Mg(2+) is bound by residues Asp532 and Asp536. The helical transmembrane segment at 587 to 606 (AHIAPIFLIKTIYSFLLAVI) threads the bilayer. Over 607–624 (CIASALLGRSEWILIFPF) the chain is Extracellular. The chain crosses the membrane as a helical span at residues 625-645 (IPIQITMIDQFVEGFPPFVLT). The Cytoplasmic segment spans residues 646 to 663 (FERNIKPVEQNFLRKSML). The chain crosses the membrane as a helical span at residues 664–684 (RALPSALMVVFSVLFVKMFGA). At 685–689 (SQGWS) the chain is on the extracellular side. The chain crosses the membrane as a helical span at residues 690–708 (ELEISTLLYYLLGSIGFLS). Over 709-716 (VFRACMPF) the chain is Cytoplasmic. A helical membrane pass occupies residues 717–739 (TLWRVLLIVWSVGGFLATALFPR). Residues 740–757 (IQKLLEISTLTEQTLPVY) are Extracellular-facing. A helical membrane pass occupies residues 758–777 (GVMMLVFTVIFILTSRYQAK). A topological domain (cytoplasmic) is located at residue Lys778.

The protein belongs to the cation transport ATPase (P-type) (TC 3.A.3) family.

Its subcellular location is the cell membrane. It carries out the reaction ATP + H2O = ADP + phosphate + H(+). This Streptococcus pneumoniae serotype 4 (strain ATCC BAA-334 / TIGR4) protein is Probable cation-transporting ATPase exp7 (exp7).